The sequence spans 202 residues: Matrix protein (202 aa).

Positions 35–38 match the PPXY motif motif; that stretch reads PPEY. An essential for glycoprotein binding region spans residues 115 to 151; that stretch reads KLRRTLIFQWADSRGPLEGEELEYSQEITWDDNTEFV.

This sequence belongs to the lyssavirus matrix protein family. Homomultimer. Interacts with nucleoprotein and with the cytoplasmic domain of glycoprotein. Interacts with host ATP6V1A; this interaction plays an important role in virion uncoating after viral entry.

Its subcellular location is the virion membrane. It is found in the host endomembrane system. The protein resides in the host cytoplasm. Its function is as follows. Plays a major role in assembly, budding and uncoating of virion after membrane fusion. Completely covers the ribonucleoprotein coil and keep it in condensed bullet-shaped form. Inhibits viral transcription and stimulates replication. Plays a major role in early induction of TRAIL-mediated apoptosis in infected neurons. Inhibits the integrated stress response (ISR) in the infected cell by blocking the formation of stress granules. The chain is Matrix protein (M) from Homo sapiens (Human).